The chain runs to 266 residues: Protein YABBY 5 (266 aa).

The interval 1–22 (MMSSAPETFSLDHLSQHQQQQP) is disordered. The C4-type zinc finger occupies 36-63 (CNFCDTILAVGVPCSSLFKTVTVRCGHC). A compositionally biased stretch (low complexity) spans 119 to 141 (ASPNVSSITSSNSSCANNAPATS). Residues 119–174 (ASPNVSSITSSNSSCANNAPATSMASAANKATQREPQQPKNAPSANRTSEKRQRVP) form a disordered region. Residues 142–165 (MASAANKATQREPQQPKNAPSANR) show a composition bias toward polar residues.

Belongs to the YABBY family.

The protein resides in the nucleus. Its function is as follows. May be involved in leaf cell growth and differentiation, rather than abaxial cell fate determination. The sequence is that of Protein YABBY 5 (YAB5) from Oryza sativa subsp. indica (Rice).